Reading from the N-terminus, the 433-residue chain is tRNA-queuosine alpha-mannosyltransferase (433 aa).

Residues 194 to 244 (PAAKSHIQTSSPSSYPDVEPPEKMLNVAGTNQSHEPTSVTPHQETASPLCG) form a disordered region. Residues 221–239 (AGTNQSHEPTSVTPHQETA) show a composition bias toward polar residues.

It belongs to the glycosyltransferase group 1 family. Glycosyltransferase 4 subfamily.

It localises to the cytoplasm. The protein localises to the nucleus. The enzyme catalyses queuosine(34) in tRNA(Asp) + GDP-alpha-D-mannose = O-4''-alpha-D-mannosylqueuosine(34) in tRNA(Asp) + GDP + H(+). In terms of biological role, glycosyltransferase that specifically catalyzes mannosylation of cytoplasmic tRNA(Asp) modified with queuosine at position 34 (queuosine(34)). Mannosylates the cyclopentene moiety of queuosine(34) in tRNA(Asp) to form mannosyl-queuosine(34). Mannosylation of queuosine(34) in tRNA(Asp) is required to slow-down elongation at cognate codons, GAC and GAU, thereby regulating protein translation. This chain is tRNA-queuosine alpha-mannosyltransferase (gtdc1), found in Danio rerio (Zebrafish).